We begin with the raw amino-acid sequence, 653 residues long: 4-hydroxy-2,2'-bipyrrole-5-methanol synthase PigH (653 aa).

One can recognise a Carrier domain in the interval 7–84; the sequence is ETYETLKQSV…DALDGILQRE (78 aa). Serine 45 bears the O-(pantetheine 4'-phosphoryl)serine mark. Pyridoxal 5'-phosphate is bound at residue 354–355; sequence GY. Histidine 379 contacts substrate. The pyridoxal 5'-phosphate site is built by serine 426, histidine 454, and threonine 482. Lysine 485 is subject to N6-(pyridoxal phosphate)lysine. The chain crosses the membrane as a helical span at residues 512-532; that stretch reads VFAATIPAPVAAGVIASIDVM.

Pyridoxal 5'-phosphate serves as cofactor.

The protein localises to the membrane. It functions in the pathway antibiotic biosynthesis; prodigiosin biosynthesis. In terms of biological role, involved in the biosynthesis of 4-methoxy-2,2'-bipyrrole-5-carbaldehyde (MBC), one of the terminal products involved in the biosynthesis of the red antibiotic prodigiosin (Pig). Carrier of the L-malonyl group (malonyl-S-PigH), which is decarboxylated by PigJ to yield a C2 carbanion acetyl-S-PigH. Then the pyrrolyl group of pyrrolyl-S-cysteinyl PigJ intermediate is captured by the C2 carbanion acetyl-S-PigH to yield the pyrrolyl-beta-ketoacyl-S-PigH. In the last step, PigH catalyzes the decarboxylative condensation between the pyrrolyl-beta-ketoacyl (pyrrolyl-beta-ketoacyl-S-PigH) and L-serine to yield 4-hydroxy-2,2'-bipyrrole-5-methanol (HBM). The sequence is that of 4-hydroxy-2,2'-bipyrrole-5-methanol synthase PigH from Serratia sp. (strain ATCC 39006) (Prodigiosinella confusarubida).